Here is a 267-residue protein sequence, read N- to C-terminus: Membrane-associated protein Vipp1 (267 aa).

Residues 26–156 (EKVLEQAVID…KANAELQQTL (131 aa)) are a coiled coil. The interval 224-252 (GTSAATPQLEAAPVDSSVPANNASQDDAV) is disordered.

This sequence belongs to the PspA/Vipp/IM30 family.

It is found in the cell inner membrane. Required for thylakoid formation. This is Membrane-associated protein Vipp1 from Synechocystis sp. (strain ATCC 27184 / PCC 6803 / Kazusa).